Consider the following 189-residue polypeptide: Tumor protein p53-inducible protein 11 (189 aa).

Residues 1-63 (MAAKQPPPLM…FAVREPLGLR (63 aa)) are Cytoplasmic-facing. A Phosphoserine modification is found at serine 14. A helical membrane pass occupies residues 64-84 (VWQFLSAMLFSSVAIMALALP). The Extracellular segment spans residues 85-108 (DQLYDAVFDGAEVTSKTPIRLYGG). The helical transmembrane segment at 109–129 (ALLSISLIMWNALYTAEKVII) threads the bilayer. Position 130 (arginine 130) is a topological domain, cytoplasmic. Residues 131–151 (WTLLTEACYFGVQSLVVTATL) traverse the membrane as a helical segment. At 152-155 (AETG) the chain is on the extracellular side. Residues 156–176 (LMSLGTLLLLASRLLFVIVSI) form a helical membrane-spanning segment. Topologically, residues 177 to 189 (YYYYQVGRKPKKV) are cytoplasmic.

It localises to the membrane. The chain is Tumor protein p53-inducible protein 11 (Tp53i11) from Rattus norvegicus (Rat).